We begin with the raw amino-acid sequence, 210 residues long: Ribosomal RNA small subunit methyltransferase G (210 aa).

Residues Gly-76, Leu-81, 127-128 (VE), and Arg-142 contribute to the S-adenosyl-L-methionine site.

It belongs to the methyltransferase superfamily. RNA methyltransferase RsmG family.

The protein resides in the cytoplasm. The catalysed reaction is guanosine(527) in 16S rRNA + S-adenosyl-L-methionine = N(7)-methylguanosine(527) in 16S rRNA + S-adenosyl-L-homocysteine. In terms of biological role, specifically methylates the N7 position of guanine in position 527 of 16S rRNA. In Vibrio atlanticus (strain LGP32) (Vibrio splendidus (strain Mel32)), this protein is Ribosomal RNA small subunit methyltransferase G.